Consider the following 88-residue polypeptide: ATP synthase F(0) complex subunit f, mitochondrial (88 aa).

Ala-2 is subject to N-acetylalanine. Ser-3 bears the Phosphoserine mark. At Lys-16 the chain carries N6-acetyllysine. The chain crosses the membrane as a helical span at residues 62–79; the sequence is MVLAAYVVFSYCISYKEL.

Belongs to the ATPase F chain family. Component of the ATP synthase complex composed at least of ATP5F1A/subunit alpha, ATP5F1B/subunit beta, ATP5MC1/subunit c (homooctomer), MT-ATP6/subunit a, MT-ATP8/subunit 8, ATP5ME/subunit e, ATP5MF/subunit f, ATP5MG/subunit g, ATP5MK/subunit k, ATP5MJ/subunit j, ATP5F1C/subunit gamma, ATP5F1D/subunit delta, ATP5F1E/subunit epsilon, ATP5PF/subunit F6, ATP5PB/subunit b, ATP5PD/subunit d, ATP5PO/subunit OSCP. ATP synthase complex consists of a soluble F(1) head domain (subunits alpha(3) and beta(3)) - the catalytic core - and a membrane F(0) domain - the membrane proton channel (subunits c, a, 8, e, f, g, k and j). These two domains are linked by a central stalk (subunits gamma, delta, and epsilon) rotating inside the F1 region and a stationary peripheral stalk (subunits F6, b, d, and OSCP).

Its subcellular location is the mitochondrion. It is found in the mitochondrion inner membrane. Functionally, subunit f, of the mitochondrial membrane ATP synthase complex (F(1)F(0) ATP synthase or Complex V) that produces ATP from ADP in the presence of a proton gradient across the membrane which is generated by electron transport complexes of the respiratory chain. ATP synthase complex consist of a soluble F(1) head domain - the catalytic core - and a membrane F(1) domain - the membrane proton channel. These two domains are linked by a central stalk rotating inside the F(1) region and a stationary peripheral stalk. During catalysis, ATP synthesis in the catalytic domain of F(1) is coupled via a rotary mechanism of the central stalk subunits to proton translocation. In vivo, can only synthesize ATP although its ATP hydrolase activity can be activated artificially in vitro. Part of the complex F(0) domain. The sequence is that of ATP synthase F(0) complex subunit f, mitochondrial from Mus musculus (Mouse).